Consider the following 142-residue polypeptide: Fusaric acid resistance protein FusB (142 aa).

Residues 73–142 (AAPCSRKAST…ASCSPAIRPR (70 aa)) form a disordered region. Residues 81–142 (STGSPARSSG…ASCSPAIRPR (62 aa)) are compositionally biased toward low complexity.

In terms of biological role, involved in the resistance (detoxification) of the fungal toxin fusaric acid. The protein is Fusaric acid resistance protein FusB (fusB) of Burkholderia cepacia (Pseudomonas cepacia).